Here is a 101-residue protein sequence, read N- to C-terminus: Urinary protein 3 (101 aa).

Positions 1–21 (MGKHILLLPLGLSLLMSSLLA) are cleaved as a signal peptide. Residues 22–99 (LQCFRCISFD…CSATPFCNMV (78 aa)) form the UPAR/Ly6 domain. 5 disulfide bridges follow: cysteine 24–cysteine 51, cysteine 27–cysteine 36, cysteine 43–cysteine 70, cysteine 73–cysteine 89, and cysteine 90–cysteine 96.

Its subcellular location is the secreted. The sequence is that of Urinary protein 3 from Rattus norvegicus (Rat).